Here is a 482-residue protein sequence, read N- to C-terminus: Probable cytosol aminopeptidase (482 aa).

The Mn(2+) site is built by Lys-251 and Asp-256. Residue Lys-263 is part of the active site. Mn(2+) is bound by residues Asp-274, Asp-333, and Glu-335. Arg-337 is an active-site residue.

The protein belongs to the peptidase M17 family. Mn(2+) serves as cofactor.

The protein resides in the cytoplasm. The catalysed reaction is Release of an N-terminal amino acid, Xaa-|-Yaa-, in which Xaa is preferably Leu, but may be other amino acids including Pro although not Arg or Lys, and Yaa may be Pro. Amino acid amides and methyl esters are also readily hydrolyzed, but rates on arylamides are exceedingly low.. It carries out the reaction Release of an N-terminal amino acid, preferentially leucine, but not glutamic or aspartic acids.. Its function is as follows. Presumably involved in the processing and regular turnover of intracellular proteins. Catalyzes the removal of unsubstituted N-terminal amino acids from various peptides. The protein is Probable cytosol aminopeptidase of Acinetobacter baylyi (strain ATCC 33305 / BD413 / ADP1).